A 118-amino-acid chain; its full sequence is Nucleoid-associated protein CTN_1899 (118 aa).

The protein belongs to the YbaB/EbfC family. As to quaternary structure, homodimer.

It localises to the cytoplasm. The protein localises to the nucleoid. Binds to DNA and alters its conformation. May be involved in regulation of gene expression, nucleoid organization and DNA protection. This chain is Nucleoid-associated protein CTN_1899, found in Thermotoga neapolitana (strain ATCC 49049 / DSM 4359 / NBRC 107923 / NS-E).